We begin with the raw amino-acid sequence, 154 residues long: Aspartate carbamoyltransferase regulatory chain (154 aa).

Cys109, Cys114, Cys138, and Cys141 together coordinate Zn(2+).

It belongs to the PyrI family. In terms of assembly, contains catalytic and regulatory chains. It depends on Zn(2+) as a cofactor.

Functionally, involved in allosteric regulation of aspartate carbamoyltransferase. This chain is Aspartate carbamoyltransferase regulatory chain, found in Methanothrix thermoacetophila (strain DSM 6194 / JCM 14653 / NBRC 101360 / PT) (Methanosaeta thermophila).